Reading from the N-terminus, the 156-residue chain is Small ribosomal subunit protein uS7 (156 aa).

The protein belongs to the universal ribosomal protein uS7 family. Part of the 30S ribosomal subunit. Contacts proteins S9 and S11.

Functionally, one of the primary rRNA binding proteins, it binds directly to 16S rRNA where it nucleates assembly of the head domain of the 30S subunit. Is located at the subunit interface close to the decoding center, probably blocks exit of the E-site tRNA. The chain is Small ribosomal subunit protein uS7 from Chromobacterium violaceum (strain ATCC 12472 / DSM 30191 / JCM 1249 / CCUG 213 / NBRC 12614 / NCIMB 9131 / NCTC 9757 / MK).